The following is a 236-amino-acid chain: 2-C-methyl-D-erythritol 4-phosphate cytidylyltransferase (236 aa).

It belongs to the IspD/TarI cytidylyltransferase family. IspD subfamily. Homodimer.

It carries out the reaction 2-C-methyl-D-erythritol 4-phosphate + CTP + H(+) = 4-CDP-2-C-methyl-D-erythritol + diphosphate. It participates in isoprenoid biosynthesis; isopentenyl diphosphate biosynthesis via DXP pathway; isopentenyl diphosphate from 1-deoxy-D-xylulose 5-phosphate: step 2/6. Its function is as follows. Catalyzes the formation of 4-diphosphocytidyl-2-C-methyl-D-erythritol from CTP and 2-C-methyl-D-erythritol 4-phosphate (MEP). The sequence is that of 2-C-methyl-D-erythritol 4-phosphate cytidylyltransferase from Buchnera aphidicola subsp. Schizaphis graminum (strain Sg).